The following is a 130-amino-acid chain: Acidic phospholipase A2 daboiatoxin B chain (130 aa).

The N-terminal stretch at 1-8 is a signal peptide; the sequence is MCLIGVEG. 7 disulfide bridges follow: cysteine 34-cysteine 123, cysteine 36-cysteine 52, cysteine 51-cysteine 103, cysteine 57-cysteine 130, cysteine 58-cysteine 96, cysteine 65-cysteine 89, and cysteine 83-cysteine 94. Tyrosine 35, glycine 37, and glycine 39 together coordinate Ca(2+). Histidine 55 is a catalytic residue. Aspartate 56 contacts Ca(2+). Aspartate 97 is an active-site residue.

Belongs to the phospholipase A2 family. Group II subfamily. D49 sub-subfamily. As to quaternary structure, heterodimer of an acidic protein having phospholipase A2 activity (B chain) and an A chain which weakly inhibits the B chain enzymatic activity but potentiates its lethal potency. Ca(2+) is required as a cofactor. As to expression, expressed by the venom gland.

It localises to the secreted. It carries out the reaction a 1,2-diacyl-sn-glycero-3-phosphocholine + H2O = a 1-acyl-sn-glycero-3-phosphocholine + a fatty acid + H(+). Its function is as follows. Monomer: Snake venom phospholipase A2 (PLA2) that shows a high PLA2 activity (2110 umol/min/mg). Heterodimer (A and B chains): snake venom phospholipase A2 that shows a moderate PLA2 activity (1377 umol/min/mg). Acts as a presynaptic neurotoxin. In vivo, induces edema and produces neurotoxic symptoms in mice. It exhibits indirect hemolysis and a strong myonecrotic activity and is cytotoxic. PLA2 catalyzes the calcium-dependent hydrolysis of the 2-acyl groups in 3-sn-phosphoglycerides. This chain is Acidic phospholipase A2 daboiatoxin B chain, found in Daboia siamensis (Eastern Russel's viper).